The following is a 557-amino-acid chain: uncharacterized protein (557 aa).

A signal peptide spans 1–30 (MAPRRRRHTRIAGLRVVGTATLVAATTLTA). Residue Cys-31 is the site of N-palmitoyl cysteine attachment. Cys-31 carries the S-diacylglycerol cysteine lipid modification.

To M.bovis Mb2616c and M.leprae ML0489.

It is found in the cell membrane. This is an uncharacterized protein from Mycobacterium tuberculosis (strain CDC 1551 / Oshkosh).